The following is a 372-amino-acid chain: MATSPQKSPSVPKSPTPKSPPSRKKDDSFLGKLGGTLARRKKAKEVSEFQEEGMNAINLPLSPISFELDPEDTMLEENEVRTMVDPNSRNDPKLQELMKVLIDWINDVLVGERIIVKDLAEDLYDGQVLQKLFEKLESEKLNVAEVTQSEIAQKQKLQTVLEKINEALKLPPRSIKWNVDSVHAKNLVAILHLLVALSQYFRAPIRLPDHVSIQVVVVQKREGILQSRQIQEEITGNTEALSGRHERDAFDTLFDHAPDKLNVVKKTLITFVNKHLNKLNLEVTELETQFADGVYLVLLMGLLEGYFVPLHSFFLTPDSFEQKVLNVSFAFELMQDGGLEKPKPRPEDIVNCDLKSTLRVLYNLFTKYRNVE.

Residues 1–11 (MATSPQKSPSV) show a composition bias toward low complexity. The tract at residues 1-44 (MATSPQKSPSVPKSPTPKSPPSRKKDDSFLGKLGGTLARRKKAK) is disordered. Ala-2 carries the post-translational modification N-acetylalanine. Phosphoserine is present on residues Ser-8, Ser-14, and Ser-19. The tract at residues 21 to 25 (PSRKK) is interaction with ARHGAP31. Phosphoserine is present on residues Ser-28 and Ser-62. Calponin-homology (CH) domains are found at residues 95-202 (QELM…QYFR) and 262-369 (NVVK…TKYR). Positions 223 to 372 (GILQSRQIQE…NLFTKYRNVE (150 aa)) are required for interaction with TESK1 and ILK.

This sequence belongs to the parvin family. Component of the heterotrimeric IPP (ILK-PINCH-PARVIN) complex composed of ILK, LIMS1/PINCH and PARVA; the complex binds to F-actin via the C-terminal tail of LIMS1 and the N-terminal region of PARVA, promoting F-actin filament bundling. Interacts with TGFB1I1. Interacts with ARHGAP31. Interacts with the actin cytoskeleton. Interacts (via C-terminus) with TESK1 (via C-terminus); the interaction inhibits TESK1 kinase activity. Interacts with PXN/PAXILLIN (via LD motif 4). As to expression, widely expressed.

It is found in the cell junction. Its subcellular location is the focal adhesion. The protein localises to the cell membrane. The protein resides in the cytoplasm. It localises to the cytoskeleton. It is found in the myofibril. Its subcellular location is the sarcomere. The protein localises to the z line. Plays a role in sarcomere organization and in smooth muscle cell contraction. Required for normal development of the embryonic cardiovascular system, and for normal septation of the heart outflow tract. Plays a role in sprouting angiogenesis and is required for normal adhesion of vascular smooth muscle cells to endothelial cells during blood vessel development. Plays a role in the reorganization of the actin cytoskeleton, formation of lamellipodia and ciliogenesis. Plays a role in the establishment of cell polarity, cell adhesion, cell spreading, and directed cell migration. Within the IPP (ILK-PINCH-PARVIN) complex, binds to F-actin, promoting F-actin bundling, a process required to generate force for actin cytoskeleton reorganization and subsequent dynamic cell adhesion events such as cell spreading and migration. The polypeptide is Alpha-parvin (Parva) (Rattus norvegicus (Rat)).